The sequence spans 130 residues: Small ribosomal subunit protein uS11c (130 aa).

This sequence belongs to the universal ribosomal protein uS11 family. As to quaternary structure, part of the 30S ribosomal subunit.

The protein localises to the plastid. The protein resides in the cyanelle. This Cyanophora paradoxa protein is Small ribosomal subunit protein uS11c.